The sequence spans 124 residues: Class I hydrophobin 1 (124 aa).

Residues 1–18 form the signal peptide; it reads MRFSIATVVLSLAAMVVA. 4 cysteine pairs are disulfide-bonded: cysteine 35/cysteine 85, cysteine 43/cysteine 79, cysteine 44/cysteine 63, and cysteine 86/cysteine 97.

The protein belongs to the fungal hydrophobin family.

The protein localises to the secreted. It is found in the cell wall. Functionally, aerial growth, conidiation, and dispersal of filamentous fungi in the environment rely upon a capability of their secreting small amphipathic proteins called hydrophobins (HPBs) with low sequence identity. Class I can self-assemble into an outermost layer of rodlet bundles on aerial cell surfaces, conferring cellular hydrophobicity that supports fungal growth, development and dispersal; whereas Class II form highly ordered films at water-air interfaces through intermolecular interactions but contribute nothing to the rodlet structure. In Botryotinia fuckeliana, hydrophobins are not involved in conferring surface hydrophobicity to conidia and aerial hyphae and their function in sclerotia and fruiting bodies remains to be investigated. The chain is Class I hydrophobin 1 (Bhp1) from Botryotinia fuckeliana (strain B05.10) (Noble rot fungus).